The sequence spans 399 residues: CCA-adding enzyme (399 aa).

Gly32 and Arg35 together coordinate ATP. Residues Gly32 and Arg35 each contribute to the CTP site. Mg(2+)-binding residues include Asp45 and Asp47. 5 residues coordinate ATP: Arg116, Asp159, Arg162, Arg165, and Arg168. The CTP site is built by Arg116, Asp159, Arg162, Arg165, and Arg168.

Belongs to the tRNA nucleotidyltransferase/poly(A) polymerase family. Bacterial CCA-adding enzyme type 3 subfamily. As to quaternary structure, homodimer. Requires Mg(2+) as cofactor.

It carries out the reaction a tRNA precursor + 2 CTP + ATP = a tRNA with a 3' CCA end + 3 diphosphate. It catalyses the reaction a tRNA with a 3' CCA end + 2 CTP + ATP = a tRNA with a 3' CCACCA end + 3 diphosphate. Catalyzes the addition and repair of the essential 3'-terminal CCA sequence in tRNAs without using a nucleic acid template. Adds these three nucleotides in the order of C, C, and A to the tRNA nucleotide-73, using CTP and ATP as substrates and producing inorganic pyrophosphate. tRNA 3'-terminal CCA addition is required both for tRNA processing and repair. Also involved in tRNA surveillance by mediating tandem CCA addition to generate a CCACCA at the 3' terminus of unstable tRNAs. While stable tRNAs receive only 3'-terminal CCA, unstable tRNAs are marked with CCACCA and rapidly degraded. The protein is CCA-adding enzyme of Streptococcus pneumoniae serotype 4 (strain ATCC BAA-334 / TIGR4).